Consider the following 174-residue polypeptide: Ferritin, heavy subunit (174 aa).

One can recognise a Ferritin-like diiron domain in the interval 7-156; it reads QNFHKDCEAA…DWVTNLRRLG (150 aa). The Fe cation site is built by Glu-24, Glu-59, His-62, Glu-104, and Gln-138.

Belongs to the ferritin family. In liver, forms a heteromer consisting of middle and heavy subunits. The functional molecule forms a roughly spherical shell with a diameter of 12 nm and contains a central cavity into which the insoluble mineral iron core is deposited. Liver (at protein level).

It carries out the reaction 4 Fe(2+) + O2 + 4 H(+) = 4 Fe(3+) + 2 H2O. Its function is as follows. Stores iron in a soluble, non-toxic, readily available form. Important for iron homeostasis. Has ferroxidase activity. Iron is taken up in the ferrous form and deposited as ferric hydroxides after oxidation. Also plays a role in delivery of iron to cells. Mediates iron uptake in capsule cells of the developing kidney. Delivery to lysosomes is mediated by the cargo receptor NCOA4 for autophagic degradation and release of iron. The protein is Ferritin, heavy subunit of Trematomus bernacchii (Emerald rockcod).